We begin with the raw amino-acid sequence, 430 residues long: Isocitrate dehydrogenase [NADP], mitochondrial (430 aa).

The N-terminal 27 residues, 1–27 (MIRASAIQRTAMLLRQLRGFSTSATLA), are a transit peptide targeting the mitochondrion. Residues 101–103 (TIT) and Arg108 each bind NADP(+). Thr103 lines the substrate pocket. Substrate contacts are provided by residues 120–126 (SPNGTIR), Arg135, and Arg158. Asp277 serves as a coordination point for Mn(2+). Residue Lys285 coordinates NADP(+). Asp300 is a binding site for Mn(2+). Residues 335–340 (GTVTRH) and Asn353 contribute to the NADP(+) site.

The protein belongs to the isocitrate and isopropylmalate dehydrogenases family. Homodimer. It depends on Mg(2+) as a cofactor. The cofactor is Mn(2+).

The protein localises to the mitochondrion. It catalyses the reaction D-threo-isocitrate + NADP(+) = 2-oxoglutarate + CO2 + NADPH. In terms of biological role, mitochondrial IDP1 may regulate flux through the tricarboxylic acid cycle and respiration. Its probably critical function is the production of NADPH. The polypeptide is Isocitrate dehydrogenase [NADP], mitochondrial (IDP1) (Candida tropicalis (Yeast)).